Reading from the N-terminus, the 329-residue chain is Secretory carrier-associated membrane protein 2 (329 aa).

The disordered stretch occupies residues 1-74; it reads MSAFDTNPFA…PSVEPAQPTP (74 aa). The Cytoplasmic segment spans residues 1-153; that stretch reads MSAFDTNPFA…DYQRICKMLY (153 aa). 2 stretches are compositionally biased toward polar residues: residues 19–31 and 40–51; these read QDPSVTQLTNAPQ and FSETNAATTVPA. A helical membrane pass occupies residues 154–174; sequence YLWMLHSVTLFLNLLACLAWF. The Lumenal segment spans residues 175 to 181; the sequence is TSDAANG. A helical membrane pass occupies residues 182 to 202; it reads TAFGLSILWFLIFTPCAFLCW. Topologically, residues 203-218 are cytoplasmic; sequence YRPIYKAFRSDNSFSF. An interaction with SLC9A7 region spans residues 203 to 218; that stretch reads YRPIYKAFRSDNSFSF. A helical transmembrane segment spans residues 219–239; it reads FVFFFVFFCQIGIYFIQLIGL. Topologically, residues 240-262 are lumenal; that stretch reads PNLGTSGWLAALSTMKNGPLAVT. Residues 263–283 traverse the membrane as a helical segment; sequence IIMMVVAGFFTLCAGLSLFLL. Over 284–329 the chain is Cytoplasmic; it reads QRVHAFYRRTGASFQQAQEEFSQGIFSSRTFRGAASSAARGAFQGN. 2 positions are modified to phosphoserine: S319 and S320.

Belongs to the SCAMP family. As to quaternary structure, interacts with SLC6A4 and SLC9A7. Interacts with SLC9A5; this interaction regulates SLC9A5 cell-surface targeting and SLC9A5 activity.

It localises to the golgi apparatus. The protein localises to the trans-Golgi network membrane. Its subcellular location is the recycling endosome membrane. Its function is as follows. Functions in post-Golgi recycling pathways. Acts as a recycling carrier to the cell surface. This Mus musculus (Mouse) protein is Secretory carrier-associated membrane protein 2 (Scamp2).